We begin with the raw amino-acid sequence, 138 residues long: ATP synthase epsilon chain (138 aa).

Belongs to the ATPase epsilon chain family. As to quaternary structure, F-type ATPases have 2 components, CF(1) - the catalytic core - and CF(0) - the membrane proton channel. CF(1) has five subunits: alpha(3), beta(3), gamma(1), delta(1), epsilon(1). CF(0) has three main subunits: a, b and c.

It is found in the cell inner membrane. Functionally, produces ATP from ADP in the presence of a proton gradient across the membrane. The protein is ATP synthase epsilon chain of Polynucleobacter necessarius subsp. necessarius (strain STIR1).